Here is a 440-residue protein sequence, read N- to C-terminus: GTPase Der (440 aa).

EngA-type G domains lie at 3-168 (PIIA…GKMD) and 177-353 (LKLA…EEYT). GTP contacts are provided by residues 9–16 (GRPNVGKS), 56–60 (DTGGL), 119–122 (NKID), 183–190 (GKPNAGKS), 230–234 (DTAGI), and 295–298 (NKWD). Residues 354–438 (KRISTGLLNT…PIMISFENKS (85 aa)) form the KH-like domain.

Belongs to the TRAFAC class TrmE-Era-EngA-EngB-Septin-like GTPase superfamily. EngA (Der) GTPase family. In terms of assembly, associates with the 50S ribosomal subunit.

In terms of biological role, GTPase that plays an essential role in the late steps of ribosome biogenesis. This chain is GTPase Der, found in Fusobacterium nucleatum subsp. nucleatum (strain ATCC 25586 / DSM 15643 / BCRC 10681 / CIP 101130 / JCM 8532 / KCTC 2640 / LMG 13131 / VPI 4355).